The primary structure comprises 258 residues: Snake venom serine protease (258 aa).

The first 18 residues, 1–18 (MVLIRVLANLLILQLSYA), serve as a signal peptide directing secretion. A propeptide spanning residues 19-24 (QKSSEL) is cleaved from the precursor. Residues 25 to 249 (VIGGDECNIN…YTEWIQSILA (225 aa)) enclose the Peptidase S1 domain. 6 disulfides stabilise this stretch: Cys-31–Cys-163, Cys-50–Cys-66, Cys-98–Cys-256, Cys-142–Cys-210, Cys-174–Cys-189, and Cys-200–Cys-225. Residues His-65 and Asp-110 each act as charge relay system in the active site. An N-linked (GlcNAc...) asparagine glycan is attached at Asn-154. The active-site Charge relay system is the Ser-204.

The protein belongs to the peptidase S1 family. Snake venom subfamily. As to quaternary structure, monomer. Expressed by the venom gland.

Its subcellular location is the secreted. Functionally, snake venom serine protease that may act in the hemostasis system of the prey. This chain is Snake venom serine protease, found in Lachesis stenophrys (Central American bushmaster).